A 345-amino-acid chain; its full sequence is Fe(3+) ions import ATP-binding protein FbpC (345 aa).

In terms of domain architecture, ABC transporter spans 4–236 (LELHGIGKSY…PVDEPTASFL (233 aa)). 36-43 (GPSGSGKT) is a binding site for ATP.

It belongs to the ABC transporter superfamily. Fe(3+) ion importer (TC 3.A.1.10) family. The complex is composed of two ATP-binding proteins (FbpC), two transmembrane proteins (FbpB) and a solute-binding protein (FbpA).

The protein resides in the cell inner membrane. It carries out the reaction Fe(3+)(out) + ATP + H2O = Fe(3+)(in) + ADP + phosphate + H(+). Its function is as follows. Part of the ABC transporter complex FbpABC involved in Fe(3+) ions import. Responsible for energy coupling to the transport system. The protein is Fe(3+) ions import ATP-binding protein FbpC of Serratia marcescens.